The chain runs to 397 residues: S-adenosylmethionine synthase (397 aa).

Residue His15 coordinates ATP. Asp17 lines the Mg(2+) pocket. Glu43 contacts K(+). Residues Glu56 and Gln99 each coordinate L-methionine. The segment at 99–109 (QSPDIAQGVTA) is flexible loop. Residues 173 to 175 (DGK), 242 to 243 (KF), Asp251, 257 to 258 (RK), Ala274, and Lys278 contribute to the ATP site. Asp251 contributes to the L-methionine binding site. Lys282 contributes to the L-methionine binding site.

Belongs to the AdoMet synthase family. In terms of assembly, homotetramer; dimer of dimers. The cofactor is Mg(2+). K(+) serves as cofactor.

The protein resides in the cytoplasm. It carries out the reaction L-methionine + ATP + H2O = S-adenosyl-L-methionine + phosphate + diphosphate. It functions in the pathway amino-acid biosynthesis; S-adenosyl-L-methionine biosynthesis; S-adenosyl-L-methionine from L-methionine: step 1/1. In terms of biological role, catalyzes the formation of S-adenosylmethionine (AdoMet) from methionine and ATP. The overall synthetic reaction is composed of two sequential steps, AdoMet formation and the subsequent tripolyphosphate hydrolysis which occurs prior to release of AdoMet from the enzyme. The protein is S-adenosylmethionine synthase of Cutibacterium acnes (strain DSM 16379 / KPA171202) (Propionibacterium acnes).